A 218-amino-acid polypeptide reads, in one-letter code: Large ribosomal subunit protein uL3 (218 aa).

The interval 132–152 (FKGQGASHGTQAVHRRPGSIG) is disordered.

It belongs to the universal ribosomal protein uL3 family. In terms of assembly, part of the 50S ribosomal subunit. Forms a cluster with proteins L14 and L19.

Functionally, one of the primary rRNA binding proteins, it binds directly near the 3'-end of the 23S rRNA, where it nucleates assembly of the 50S subunit. The chain is Large ribosomal subunit protein uL3 from Rhodococcus erythropolis (strain PR4 / NBRC 100887).